A 671-amino-acid chain; its full sequence is cGMP-dependent protein kinase 1 (671 aa).

N-acetylserine is present on serine 2. Residues 2-59 (SELEEDFAKILMLKEERIKELEKRLSEKEEEIQELKRKLHKCQSVLPVPSTHIGPRTT) adopt a coiled-coil conformation. The required for dimerization stretch occupies residues 2-102 (SELEEDFAKI…LIKEAILDND (101 aa)). Residues 9-44 (AKILMLKEERIKELEKRLSEKEEEIQELKRKLHKCQ) form a leucine-zipper region. The tract at residues 50–75 (PSTHIGPRTTRAQGISAEPQTYRSFH) is autoinhibitory domain. Phosphothreonine; by autocatalysis is present on threonine 59. Residues 103–220 (FMKNLELSQI…EYMEFLKSVP (118 aa)) form a cGMP-binding, high affinity region. 3',5'-cyclic GMP-binding positions include 167–170 (GELA), 177–178 (RT), arginine 282, 291–294 (GEKA), 301–302 (RT), and tyrosine 336. Positions 221 to 341 (TFQSLPEEIL…SNKAYEDAEA (121 aa)) are cGMP-binding, low affinity. The region spanning 360-619 (FNIIDTLGVG…VKDIQKHKWF (260 aa)) is the Protein kinase domain. ATP contacts are provided by residues 366 to 374 (LGVGGFGRV) and lysine 390. Residue aspartate 484 is the Proton acceptor of the active site. The residue at position 515 (threonine 515) is a Phosphothreonine. Residues 620-671 (EGFNWEGLRKGTLTPPIIPSVASPTDTSNFDGFPEDNDEPPPDDNSGWDIDF) form the AGC-kinase C-terminal domain. The segment at 635 to 671 (PIIPSVASPTDTSNFDGFPEDNDEPPPDDNSGWDIDF) is disordered. The segment covering 652 to 661 (FPEDNDEPPP) has biased composition (acidic residues).

It belongs to the protein kinase superfamily. AGC Ser/Thr protein kinase family. cGMP subfamily. Isoform alpha: parallel homodimer or heterodimer and also heterotetramer. Interacts directly with PPP1R12A. Non-covalent dimer of dimer of PRKG1-PRKG1 and PPP1R12A-PPP1R12A. This interaction targets PRKG1 to stress fibers to mediate smooth muscle cell relaxation and vasodilation in responses to rises in cGMP. Isoform beta: antiparallel homodimer. Part of cGMP kinase signaling complex at least composed of ACTA2/alpha-actin, CNN1/calponin H1, PLN/phospholamban, PRKG1 and ITPR1. Interacts with IRAG1. Forms a stable complex with ITPR1, IRAG1, and isoform beta of PRKG1. Interacts with TRPC7 (via ankyrin repeat domain). Isoform alpha interacts with RGS2. Interacts with GTF2I. Autophosphorylation increases kinase activity. In terms of processing, 65 kDa monomer is produced by proteolytic cleavage.

It localises to the cytoplasm. It carries out the reaction L-seryl-[protein] + ATP = O-phospho-L-seryl-[protein] + ADP + H(+). It catalyses the reaction L-threonyl-[protein] + ATP = O-phospho-L-threonyl-[protein] + ADP + H(+). In the absence of cGMP, PRKG1 activity is suppressed by autoinhibitory contacts. Serine/threonine protein kinase that acts as a key mediator of the nitric oxide (NO)/cGMP signaling pathway. GMP binding activates PRKG1, which phosphorylates serines and threonines on many cellular proteins. Numerous protein targets for PRKG1 phosphorylation are implicated in modulating cellular calcium, but the contribution of each of these targets may vary substantially among cell types. Proteins that are phosphorylated by PRKG1 regulate platelet activation and adhesion, smooth muscle contraction, cardiac function, gene expression, feedback of the NO-signaling pathway, and other processes involved in several aspects of the CNS like axon guidance, hippocampal and cerebellar learning, circadian rhythm and nociception. Smooth muscle relaxation is mediated through lowering of intracellular free calcium, by desensitization of contractile proteins to calcium, and by decrease in the contractile state of smooth muscle or in platelet activation. Regulates intracellular calcium levels via several pathways: phosphorylates IRAG1 and inhibits IP3-induced Ca(2+) release from intracellular stores, phosphorylation of KCNMA1 (BKCa) channels decreases intracellular Ca(2+) levels, which leads to increased opening of this channel. PRKG1 phosphorylates the canonical transient receptor potential channel (TRPC) family which inactivates the associated inward calcium current. Another mode of action of NO/cGMP/PKGI signaling involves PKGI-mediated inactivation of the Ras homolog gene family member A (RhoA). Phosphorylation of RHOA by PRKG1 blocks the action of this protein in myriad processes: regulation of RHOA translocation; decreasing contraction; controlling vesicle trafficking, reduction of myosin light chain phosphorylation resulting in vasorelaxation. Activation of PRKG1 by NO signaling also alters gene expression in a number of tissues. In smooth muscle cells, increased cGMP and PRKG1 activity influence expression of smooth muscle-specific contractile proteins, levels of proteins in the NO/cGMP signaling pathway, down-regulation of the matrix proteins osteopontin and thrombospondin-1 to limit smooth muscle cell migration and phenotype. Regulates vasodilator-stimulated phosphoprotein (VASP) functions in platelets and smooth muscle. This is cGMP-dependent protein kinase 1 (PRKG1) from Oryctolagus cuniculus (Rabbit).